The primary structure comprises 256 residues: D-aminoacyl-tRNA deacylase (256 aa).

This sequence belongs to the DtdA deacylase family. Monomer. The cofactor is Zn(2+).

The enzyme catalyses a D-aminoacyl-tRNA + H2O = a tRNA + a D-alpha-amino acid + H(+). It catalyses the reaction glycyl-tRNA(Ala) + H2O = tRNA(Ala) + glycine + H(+). Its function is as follows. D-aminoacyl-tRNA deacylase with broad substrate specificity. By recycling D-aminoacyl-tRNA to D-amino acids and free tRNA molecules, this enzyme counteracts the toxicity associated with the formation of D-aminoacyl-tRNA entities in vivo. This is D-aminoacyl-tRNA deacylase from Thermoplasma volcanium (strain ATCC 51530 / DSM 4299 / JCM 9571 / NBRC 15438 / GSS1).